A 498-amino-acid polypeptide reads, in one-letter code: Glycerol kinase 1 (498 aa).

An ADP-binding site is contributed by Thr-12. Thr-12, Thr-13, and Ser-14 together coordinate ATP. Thr-12 provides a ligand contact to sn-glycerol 3-phosphate. ADP is bound at residue Arg-16. The sn-glycerol 3-phosphate site is built by Arg-82, Glu-83, Tyr-134, and Asp-243. Glycerol is bound by residues Arg-82, Glu-83, Tyr-134, Asp-243, and Gln-244. Residues Thr-265 and Gly-308 each coordinate ADP. ATP contacts are provided by Thr-265, Gly-308, Gln-312, and Gly-409. Positions 409 and 413 each coordinate ADP.

Belongs to the FGGY kinase family. In terms of assembly, homotetramer and homodimer (in equilibrium).

It carries out the reaction glycerol + ATP = sn-glycerol 3-phosphate + ADP + H(+). The protein operates within polyol metabolism; glycerol degradation via glycerol kinase pathway; sn-glycerol 3-phosphate from glycerol: step 1/1. Its activity is regulated as follows. Activated by phosphorylation and inhibited by fructose 1,6-bisphosphate (FBP). Functionally, key enzyme in the regulation of glycerol uptake and metabolism. Catalyzes the phosphorylation of glycerol to yield sn-glycerol 3-phosphate. The polypeptide is Glycerol kinase 1 (Clostridium tetani (strain Massachusetts / E88)).